The sequence spans 708 residues: Leukotoxin translocation ATP-binding protein LktB (708 aa).

In terms of domain architecture, Peptidase C39 spans 1–126 (MEANHQRNDL…ACYQGQLILV (126 aa)). The 283-residue stretch at 155–437 (FLETLIVSIF…LAQLWQDFQQ (283 aa)) folds into the ABC transmembrane type-1 domain. 5 helical membrane-spanning segments follow: residues 159 to 179 (LIVSIFLQIFALITPLFFQVV), 192 to 212 (LNIITVALAIVIIFEIVLSGL), 270 to 290 (ALTSVLDLLFSFIFFAVMWYY), 296 to 316 (LVILGSLPFYILWSIFISPIL), and 389 to 409 (VMVINLWLGAHLVISGDLSIG). The ABC transporter domain occupies 469 to 704 (ISFKNIRFRY…SNGLYSYLHQ (236 aa)). 503–510 (GRSGSGKS) provides a ligand contact to ATP.

This sequence belongs to the ABC transporter superfamily. Protein-1 exporter (TC 3.A.1.109) family. Homodimer.

The protein resides in the cell inner membrane. The enzyme catalyses ATP + H2O + proteinSide 1 = ADP + phosphate + proteinSide 2.. In terms of biological role, part of the ABC transporter complex LktBD involved in leukotoxin export. Transmembrane domains (TMD) form a pore in the inner membrane and the ATP-binding domain (NBD) is responsible for energy generation. The protein is Leukotoxin translocation ATP-binding protein LktB (lktB) of Bibersteinia trehalosi (Pasteurella trehalosi).